The following is a 164-amino-acid chain: Transcriptional repressor NrdR (164 aa).

A zinc finger lies at 3–34 (CPKCNYHKSSVVDSRQAEDGNTIRRRRECEQC). The ATP-cone domain occupies 49–139 (LLVIKKDGTR…VYKSFKDVDE (91 aa)).

The protein belongs to the NrdR family. It depends on Zn(2+) as a cofactor.

In terms of biological role, negatively regulates transcription of bacterial ribonucleotide reductase nrd genes and operons by binding to NrdR-boxes. In Streptococcus pyogenes serotype M5 (strain Manfredo), this protein is Transcriptional repressor NrdR.